The chain runs to 374 residues: Ribosomal RNA large subunit methyltransferase G (374 aa).

The protein belongs to the methyltransferase superfamily. RlmG family.

The protein resides in the cytoplasm. It catalyses the reaction guanosine(1835) in 23S rRNA + S-adenosyl-L-methionine = N(2)-methylguanosine(1835) in 23S rRNA + S-adenosyl-L-homocysteine + H(+). In terms of biological role, specifically methylates the guanine in position 1835 (m2G1835) of 23S rRNA. The polypeptide is Ribosomal RNA large subunit methyltransferase G (Pseudomonas syringae pv. tomato (strain ATCC BAA-871 / DC3000)).